The following is a 316-amino-acid chain: Ferrochelatase (316 aa).

Residues His-186 and Glu-268 each coordinate Fe cation.

The protein belongs to the ferrochelatase family.

The protein localises to the cytoplasm. It catalyses the reaction heme b + 2 H(+) = protoporphyrin IX + Fe(2+). It participates in porphyrin-containing compound metabolism; protoheme biosynthesis; protoheme from protoporphyrin-IX: step 1/1. Functionally, catalyzes the ferrous insertion into protoporphyrin IX. The protein is Ferrochelatase of Deinococcus radiodurans (strain ATCC 13939 / DSM 20539 / JCM 16871 / CCUG 27074 / LMG 4051 / NBRC 15346 / NCIMB 9279 / VKM B-1422 / R1).